Here is a 147-residue protein sequence, read N- to C-terminus: Large ribosomal subunit protein uL13 (147 aa).

This sequence belongs to the universal ribosomal protein uL13 family. Part of the 50S ribosomal subunit.

In terms of biological role, this protein is one of the early assembly proteins of the 50S ribosomal subunit, although it is not seen to bind rRNA by itself. It is important during the early stages of 50S assembly. This chain is Large ribosomal subunit protein uL13, found in Streptomyces griseus subsp. griseus (strain JCM 4626 / CBS 651.72 / NBRC 13350 / KCC S-0626 / ISP 5235).